The following is a 218-amino-acid chain: Small ribosomal subunit protein uS3c (218 aa).

One can recognise a KH type-2 domain in the interval 47–118 (VQKNLKISSG…KLNITITRIA (72 aa)).

The protein belongs to the universal ribosomal protein uS3 family. Part of the 30S ribosomal subunit.

Its subcellular location is the plastid. The protein resides in the chloroplast. This chain is Small ribosomal subunit protein uS3c (rps3), found in Daucus carota (Wild carrot).